The following is a 500-amino-acid chain: MQDQYILALDQGTTSSRAMLFDRQGNIVSIAQKEFEQIYPQPGWVEHDPQEIWSTQAGVAAEAVTRVGLNGTAIAAIGITNQRETTIVWDRETGHPIYNAIVWQDRRTADFCDKLKAQGLSEKVRAKTGLPIDSYFSATKIRWILDNVEGAREKARQGKLAFGTVDSWLVWNFTKHELHVTDVTNASRTMLFNIHTLDWDDELLDALEIPRSMLPQVRASSEIYGPTKTTVFASKIPLAGIAGDQQAALFGQMCTSSGMVKNTYGTGCFLMMNTGETPIESRNNLVTTIAWQVDGKVSYALEGSIFIAGAVVQWLRDGLGIIKSASEIEALAAGVPHTDGVYLVPAFAGLGAPHWNARARGSLFGVTRGTTSAHLARAALDSIAYQSLDVLKAMEADSGIRIGELRVDGGASANNLLMQFQADLLGVDAVRPRITETTALGAAYLAGLAIGYWQNVDELHSQWQLERRFAPSMQAEQVGSCLAGWQRAVRAAKAWADDTQ.

Thr-13 is a binding site for ADP. ATP contacts are provided by Thr-13, Thr-14, and Ser-15. Thr-13 contributes to the sn-glycerol 3-phosphate binding site. Residue Arg-17 participates in ADP binding. Arg-83, Glu-84, Tyr-135, and Asp-244 together coordinate sn-glycerol 3-phosphate. Glycerol-binding residues include Arg-83, Glu-84, Tyr-135, Asp-244, and Gln-245. The ADP site is built by Thr-266 and Gly-309. ATP is bound by residues Thr-266, Gly-309, Gln-313, and Gly-410. The ADP site is built by Gly-410 and Asn-414.

This sequence belongs to the FGGY kinase family.

The catalysed reaction is glycerol + ATP = sn-glycerol 3-phosphate + ADP + H(+). It functions in the pathway polyol metabolism; glycerol degradation via glycerol kinase pathway; sn-glycerol 3-phosphate from glycerol: step 1/1. Inhibited by fructose 1,6-bisphosphate (FBP). Its function is as follows. Key enzyme in the regulation of glycerol uptake and metabolism. Catalyzes the phosphorylation of glycerol to yield sn-glycerol 3-phosphate. The polypeptide is Glycerol kinase (Burkholderia pseudomallei (strain K96243)).